A 575-amino-acid polypeptide reads, in one-letter code: Epsin-1 (575 aa).

A 1,2-diacyl-sn-glycero-3-phospho-(1D-myo-inositol-4,5-bisphosphate) contacts are provided by Arg-8, Lys-11, Arg-25, Asn-30, Arg-63, and His-73. One can recognise an ENTH domain in the interval 12–144 (NIVHNYSEAE…RDEDRLREER (133 aa)). The disordered stretch occupies residues 149–186 (KTKEKLAQTATASSAAVGSGPPPEAEQAWPQSSGEEEL). A compositionally biased stretch (low complexity) spans 157–167 (TATASSAAVGS). UIM domains are found at residues 183–202 (EEELQLQLALAMSKEEADQP), 208–227 (EDDVQLQLALSLSREEHDKE), and 233–252 (GDDLRLQMAIEESKRETGGK). Disordered stretches follow at residues 264–283 (FTTPAPPQASDPWGGPASVP) and 293–575 (SDPW…PFLL). Tandem repeats lie at residues 274–276 (DPW), 294–296 (DPW), 306–308 (DPW), 319–321 (DPW), 332–334 (DPW), 349–351 (DPW), 367–369 (DPW), and 377–379 (DPW). Residues 274–379 (DPWGGPASVP…APAPAFSDPW (106 aa)) form an 8 X 3 AA repeats of D-P-W region. The segment covering 306 to 316 (DPWGGAAPTPA) has biased composition (low complexity). Over residues 333 to 346 (PWGGTPAPAAGEGP) the composition is skewed to low complexity. Over residues 367–379 (DPWAPAPAFSDPW) the composition is skewed to low complexity. Position 382 is a phosphoserine (Ser-382). Positions 401 to 410 (DEFSDFDRLR) match the [DE]-X(1,2)-F-X-X-[FL]-X-X-X-R motif motif. A phosphoserine mark is found at Ser-418 and Ser-419. Thr-420 carries the phosphothreonine modification. Phosphoserine is present on residues Ser-434, Ser-446, and Ser-453. Pro residues predominate over residues 453-467 (SPPPAATPTPTPPTR). Residues Thr-459, Thr-463, and Thr-469 each carry the phosphothreonine modification. At Ser-472 the chain carries Phosphoserine. Thr-493 carries the post-translational modification Phosphothreonine. Repeat copies occupy residues 501 to 503 (NPF) and 517 to 519 (NPF). Positions 501-573 (NPFLPSGAPA…GPPAPNTNPF (73 aa)) are 3 X 3 AA repeats of N-P-F. Position 533 is an omega-N-methylarginine (Arg-533). Positions 556–569 (GLPPMMPPGPPAPN) are enriched in pro residues. Repeat 3 spans residues 571–573 (NPF).

Belongs to the epsin family. As to quaternary structure, monomer. Binds ITSN1. Binds clathrin, ZBTB16/ZNF145, AP2A1 and AP2A2. Binds ubiquitinated proteins. Interacts with RALBP1 in a complex also containing NUMB and TFAP2A during interphase and mitosis. Interacts with AP2B1. Interacts with UBQLN2. Interacts with REPS2; the interaction is direct. Interacts with EPS15; the interaction is direct. Interacts with ENTREP1. Ubiquitinated. Post-translationally, phosphorylated on serine and/or threonine residues in mitotic cells. Phosphorylation reduces interaction with REPS2, AP-2 and the membrane fraction. Depolarization of synaptosomes results in dephosphorylation. As to expression, ubiquitously expressed. Detected in liver, spleen and testis, and weakly in lung and thymus (at protein level).

Its subcellular location is the cytoplasm. The protein localises to the cell membrane. It is found in the nucleus. The protein resides in the membrane. It localises to the clathrin-coated pit. Its function is as follows. Binds to membranes enriched in phosphatidylinositol 4,5-bisphosphate (PtdIns(4,5)P2). Modifies membrane curvature and facilitates the formation of clathrin-coated invaginations. Regulates receptor-mediated endocytosis. The chain is Epsin-1 (Epn1) from Rattus norvegicus (Rat).